The primary structure comprises 250 residues: Cell division protein ZapD (250 aa).

This sequence belongs to the ZapD family. In terms of assembly, interacts with FtsZ.

It localises to the cytoplasm. Its function is as follows. Cell division factor that enhances FtsZ-ring assembly. Directly interacts with FtsZ and promotes bundling of FtsZ protofilaments, with a reduction in FtsZ GTPase activity. The chain is Cell division protein ZapD from Yersinia pseudotuberculosis serotype O:1b (strain IP 31758).